A 187-amino-acid chain; its full sequence is NADH-quinone oxidoreductase subunit B (187 aa).

Cysteine 51, cysteine 52, cysteine 117, and cysteine 149 together coordinate [4Fe-4S] cluster.

The protein belongs to the complex I 20 kDa subunit family. In terms of assembly, NDH-1 is composed of 14 different subunits. Subunits NuoB, C, D, E, F, and G constitute the peripheral sector of the complex. [4Fe-4S] cluster serves as cofactor.

It is found in the cell inner membrane. The catalysed reaction is a quinone + NADH + 5 H(+)(in) = a quinol + NAD(+) + 4 H(+)(out). NDH-1 shuttles electrons from NADH, via FMN and iron-sulfur (Fe-S) centers, to quinones in the respiratory chain. The immediate electron acceptor for the enzyme in this species is believed to be ubiquinone. Couples the redox reaction to proton translocation (for every two electrons transferred, four hydrogen ions are translocated across the cytoplasmic membrane), and thus conserves the redox energy in a proton gradient. The protein is NADH-quinone oxidoreductase subunit B of Nitratidesulfovibrio vulgaris (strain DSM 19637 / Miyazaki F) (Desulfovibrio vulgaris).